The following is a 267-amino-acid chain: Phosphate import ATP-binding protein PstB 2 (267 aa).

In terms of domain architecture, ABC transporter spans 21-262 (LATKDLHVYY…AQCQSTNDYV (242 aa)). Residue 53 to 60 (GPSGCGKS) participates in ATP binding.

It belongs to the ABC transporter superfamily. Phosphate importer (TC 3.A.1.7) family. The complex is composed of two ATP-binding proteins (PstB), two transmembrane proteins (PstC and PstA) and a solute-binding protein (PstS).

The protein resides in the cell membrane. The enzyme catalyses phosphate(out) + ATP + H2O = ADP + 2 phosphate(in) + H(+). In terms of biological role, part of the ABC transporter complex PstSACB involved in phosphate import. Responsible for energy coupling to the transport system. This Streptococcus pyogenes serotype M18 (strain MGAS8232) protein is Phosphate import ATP-binding protein PstB 2.